Reading from the N-terminus, the 138-residue chain is uncharacterized protein (138 aa).

This is an uncharacterized protein from Archaeoglobus fulgidus (strain ATCC 49558 / DSM 4304 / JCM 9628 / NBRC 100126 / VC-16).